A 513-amino-acid chain; its full sequence is Glutamate--tRNA ligase 2 (513 aa).

Positions 11 to 21 (PSPTGFLHIGS) match the 'HIGH' region motif. A 'KMSKS' region motif is present at residues 240 to 244 (KLSKR). ATP is bound at residue K243. The 49-residue stretch at 335–383 (NTLLRHLPYREEFGGNTERSTAAYIDIREDASTGLTYKLPLAVELPKKF) folds into the RPE1 insert domain.

The protein belongs to the class-I aminoacyl-tRNA synthetase family. Glutamate--tRNA ligase type 1 subfamily. Monomer.

It is found in the cytoplasm. The catalysed reaction is tRNA(Glu) + L-glutamate + ATP = L-glutamyl-tRNA(Glu) + AMP + diphosphate. Catalyzes the attachment of glutamate to tRNA(Glu) in a two-step reaction: glutamate is first activated by ATP to form Glu-AMP and then transferred to the acceptor end of tRNA(Glu). This Rickettsia conorii (strain ATCC VR-613 / Malish 7) protein is Glutamate--tRNA ligase 2.